Reading from the N-terminus, the 225-residue chain is MESVQTRLCASSNQFAPFKKRQLAVPVGSVNSLTHTITSTTVTSVIPKNYQEKRQKICHIISSLRNTHLNFNKIQSVHKKKLRHLQNLLRKKNEIIAELVRKLESAQKKTTHRNISKPAHWKYFGVVRCDNTIRTIIGNEKFVRRRLAELCTLYNAEYVFCQARADGDKDRQALASLLTAAFGSRVIVYENSRRFEFINPDEIASGKRLIIKHLQDESQSDINAY.

As to quaternary structure, interacts with proteins IE0 and IE1. Interacts with protein FP25K. Interacts with host importin alpha-16. Post-translationally, palmitoylated.

It localises to the host nucleus inner membrane. Its subcellular location is the virion. The protein resides in the host cytoplasm. The protein localises to the host nucleus. Functionally, plays a role in the sorting of ODV envelope proteins to the host inner nuclear membrane. May facilitate the fusion and release of nucleocapsids into the cytoplasm. Modulates the expression levels of IE0 and IE1. The protein is Protein E26 (DA26) of Lepidoptera (butterflies and moths).